The chain runs to 358 residues: Alanine racemase (358 aa).

The active-site Proton acceptor; specific for D-alanine is the K34. K34 is subject to N6-(pyridoxal phosphate)lysine. R130 provides a ligand contact to substrate. Residue Y254 is the Proton acceptor; specific for L-alanine of the active site. A substrate-binding site is contributed by M302.

Belongs to the alanine racemase family. Pyridoxal 5'-phosphate is required as a cofactor.

The enzyme catalyses L-alanine = D-alanine. Its pathway is amino-acid biosynthesis; D-alanine biosynthesis; D-alanine from L-alanine: step 1/1. Functionally, catalyzes the interconversion of L-alanine and D-alanine. May also act on other amino acids. This is Alanine racemase (alr) from Stutzerimonas stutzeri (strain A1501) (Pseudomonas stutzeri).